The chain runs to 104 residues: Protein S100-A14 (104 aa).

The EF-hand domain maps to 27 to 61 (KNFHQYSVEGGKETLTPSELRDLVTQQLPHLMPSN).

This sequence belongs to the S-100 family. As to quaternary structure, homodimer. Interacts with AGER. As to expression, expressed at highest levels in colon and at moderate levels in thymus, kidney, liver, small intestine, and lung. Low expression in heart and no expression is seen in brain, skeletal muscle, spleen, placenta and peripheral blood leukocytes.

The protein resides in the cytoplasm. Modulates P53/TP53 protein levels, and thereby plays a role in the regulation of cell survival and apoptosis. Depending on the context, it can promote cell proliferation or apoptosis. Plays a role in the regulation of cell migration by modulating the levels of MMP2, a matrix protease that is under transcriptional control of P53/TP53. Does not bind calcium. In Homo sapiens (Human), this protein is Protein S100-A14 (S100A14).